Consider the following 51-residue polypeptide: Insulin-1 (51 aa).

3 cysteine pairs are disulfide-bonded: C8-C37, C20-C50, and C36-C41.

The protein belongs to the insulin family. Heterodimer of a B chain and an A chain linked by two disulfide bonds.

The protein resides in the secreted. Its function is as follows. Insulin decreases blood glucose concentration. It increases cell permeability to monosaccharides, amino acids and fatty acids. It accelerates glycolysis, the pentose phosphate cycle, and glycogen synthesis in liver. This chain is Insulin-1 (ins1), found in Batrachoididae sp. (Toadfish).